Consider the following 232-residue polypeptide: Flagellar L-ring protein (232 aa).

Positions Met-1–Gly-15 are cleaved as a signal peptide. Residue Cys-16 is the site of N-palmitoyl cysteine attachment. The S-diacylglycerol cysteine moiety is linked to residue Cys-16.

The protein belongs to the FlgH family. As to quaternary structure, the basal body constitutes a major portion of the flagellar organelle and consists of four rings (L,P,S, and M) mounted on a central rod.

The protein localises to the cell outer membrane. The protein resides in the bacterial flagellum basal body. Functionally, assembles around the rod to form the L-ring and probably protects the motor/basal body from shearing forces during rotation. In Campylobacter jejuni subsp. doylei (strain ATCC BAA-1458 / RM4099 / 269.97), this protein is Flagellar L-ring protein.